Reading from the N-terminus, the 170-residue chain is Peptide deformylase (170 aa).

Fe cation is bound by residues Cys-94 and His-136. Residue Glu-137 is part of the active site. His-140 serves as a coordination point for Fe cation.

Belongs to the polypeptide deformylase family. Fe(2+) is required as a cofactor.

It carries out the reaction N-terminal N-formyl-L-methionyl-[peptide] + H2O = N-terminal L-methionyl-[peptide] + formate. Removes the formyl group from the N-terminal Met of newly synthesized proteins. Requires at least a dipeptide for an efficient rate of reaction. N-terminal L-methionine is a prerequisite for activity but the enzyme has broad specificity at other positions. In Stenotrophomonas maltophilia (strain K279a), this protein is Peptide deformylase.